Here is a 494-residue protein sequence, read N- to C-terminus: Solute carrier family 2, facilitated glucose transporter member 3 (494 aa).

Residues 1 to 10 (MGTTKVTTPL) are Cytoplasmic-facing. Residues 11-32 (IFAISIATIGSFQFGYNTGVIN) form a helical membrane-spanning segment. Over 33 to 64 (APEAIIKDFLNYTLEERSETPPSSVLLTSLWS) the chain is Extracellular. N-linked (GlcNAc...) asparagine glycosylation is present at asparagine 43. Residues 65-85 (LSVAIFSVGGMIGSFSVGLFV) traverse the membrane as a helical segment. At 86-90 (NRFGR) the chain is on the cytoplasmic side. Residues 91-111 (RNSMLIVNLLAIAGGCLMGFC) traverse the membrane as a helical segment. Residues 112 to 118 (KIAESVE) are Extracellular-facing. A helical transmembrane segment spans residues 119 to 142 (MLILGRLIIGLFCGLCTGFVPMYI). Topologically, residues 143–153 (GEISPTALRGA) are cytoplasmic. A helical transmembrane segment spans residues 154–174 (FGTLNQLGIVIGILVAQIFGL). Glutamine 159 contributes to the D-glucose binding site. The Extracellular portion of the chain corresponds to 175–183 (KVILGTEDL). The chain crosses the membrane as a helical span at residues 184 to 204 (WPLLLGFTILPAIIQCAALPF). The Cytoplasmic portion of the chain corresponds to 205-269 (CPESPRFLLI…LFRAPNYRQP (65 aa)). Threonine 232 bears the Phosphothreonine mark. Residues 270 to 290 (IIISIMLQLSQQLSGINAVFY) form a helical membrane-spanning segment. The important for selectivity against fructose stretch occupies residues 277–279 (QLS). Residues 280–281 (QQ) and asparagine 286 contribute to the D-glucose site. The Extracellular portion of the chain corresponds to 291 to 304 (YSTGIFKDAGVQEP). The helical transmembrane segment at 305-325 (VYATIGAGVVNTIFTVVSVFL) threads the bilayer. Asparagine 315 provides a ligand contact to D-glucose. The Cytoplasmic segment spans residues 326-331 (VERAGR). The chain crosses the membrane as a helical span at residues 332–352 (RTLHLIGLGGMAFCSILMTIS). Over 353–363 (LLLKDNYSWMS) the chain is Extracellular. Residues 364–389 (FICIGAILVFVAFFEIGPGPIPWFIV) form a helical membrane-spanning segment. Glutamate 378 and tryptophan 386 together coordinate D-glucose. Residues 390-399 (AELFGQGPRP) lie on the Cytoplasmic side of the membrane. Residues 400–420 (AAMAVAGCSNWTSNFLVGLLF) form a helical membrane-spanning segment. At 421–429 (PSATFYLGA) the chain is on the extracellular side. Residues 430–450 (YVFIVFTVFLVIFWVFTFFKV) traverse the membrane as a helical segment. Residues 451–494 (PETRGRTFEEITRAFEGQVQTGTRGEKGPIMEMNSIQPTKDTNA) lie on the Cytoplasmic side of the membrane. Residues 473–494 (TRGEKGPIMEMNSIQPTKDTNA) are disordered. The span at 484 to 494 (NSIQPTKDTNA) shows a compositional bias: polar residues. Residue serine 485 is modified to Phosphoserine. Residue threonine 492 is modified to Phosphothreonine.

The protein belongs to the major facilitator superfamily. Sugar transporter (TC 2.A.1.1) family. Glucose transporter subfamily. As to quaternary structure, interacts with SMIM43; the interaction may promote SLC2A3-mediated glucose transport to meet the energy needs of mesendoderm differentiation. In terms of tissue distribution, detected in placenta.

It is found in the cell membrane. Its subcellular location is the perikaryon. The protein resides in the cell projection. It carries out the reaction D-glucose(out) = D-glucose(in). The enzyme catalyses D-galactose(in) = D-galactose(out). Its activity is regulated as follows. Deoxyglucose transport is inhibited by D-glucose, D-galactose and maltose. Galactose transport is inhibited by D-glucose and maltose. Facilitative glucose transporter. Can also mediate the uptake of various other monosaccharides across the cell membrane. Mediates the uptake of glucose, 2-deoxyglucose, galactose, mannose, xylose and fucose, and probably also dehydroascorbate. Does not mediate fructose transport. Required for mesendoderm differentiation. This is Solute carrier family 2, facilitated glucose transporter member 3 from Ovis aries (Sheep).